The following is a 245-amino-acid chain: Ribosomal RNA small subunit methyltransferase G (245 aa).

Residues Gly-85, Phe-90, 108 to 110 (DST), 136 to 137 (AE), and Arg-155 each bind S-adenosyl-L-methionine.

It belongs to the methyltransferase superfamily. RNA methyltransferase RsmG family.

The protein localises to the cytoplasm. In terms of biological role, specifically methylates the N7 position of a guanine in 16S rRNA. The polypeptide is Ribosomal RNA small subunit methyltransferase G (Trichormus variabilis (strain ATCC 29413 / PCC 7937) (Anabaena variabilis)).